Here is a 310-residue protein sequence, read N- to C-terminus: Methionyl-tRNA formyltransferase (310 aa).

Position 111–114 (111–114 (SILP)) interacts with (6S)-5,6,7,8-tetrahydrofolate.

Belongs to the Fmt family.

It carries out the reaction L-methionyl-tRNA(fMet) + (6R)-10-formyltetrahydrofolate = N-formyl-L-methionyl-tRNA(fMet) + (6S)-5,6,7,8-tetrahydrofolate + H(+). Its function is as follows. Attaches a formyl group to the free amino group of methionyl-tRNA(fMet). The formyl group appears to play a dual role in the initiator identity of N-formylmethionyl-tRNA by promoting its recognition by IF2 and preventing the misappropriation of this tRNA by the elongation apparatus. This Methylobacterium sp. (strain 4-46) protein is Methionyl-tRNA formyltransferase.